A 229-amino-acid chain; its full sequence is Ribonuclease T (229 aa).

The Exonuclease domain occupies 23-197; the sequence is VIIDVETAGF…YDTERTAELF (175 aa). The Mg(2+) site is built by Asp26, Glu28, His184, and Asp189. The active-site Proton donor/acceptor is His184.

It belongs to the RNase T family. Homodimer. The cofactor is Mg(2+).

In terms of biological role, trims short 3' overhangs of a variety of RNA species, leaving a one or two nucleotide 3' overhang. Responsible for the end-turnover of tRNA: specifically removes the terminal AMP residue from uncharged tRNA (tRNA-C-C-A). Also appears to be involved in tRNA biosynthesis. In Haemophilus influenzae (strain PittEE), this protein is Ribonuclease T.